A 296-amino-acid polypeptide reads, in one-letter code: MSALPAWLRVEARSYSEMAKVRSVLSRLGVYTVCEGARCPNVFRCWGEGTATFMILGEVCTRACRFCSVRTGNPRGYVDLDEPRRVAEAVRRLGLRYVVVTSVDRDDLPDGGAFQYASAIREIRRLAPGALVEVLTPDFRGSREAVETVAEAGPDVFAHNVETVRRLTPLVRDRRASYETSLRVLKTAKEVGCRLTKSGIMLGLGESFDEVVEVLDDLRKAEVDIVTIGQYVRPTKSARHLPVARWVPLEEFQKLGEVALSMGFKAVASAPLVRSSYRAEDLYEMALGLRPRAVLV.

[4Fe-4S] cluster-binding residues include Cys-34, Cys-39, Cys-45, Cys-60, Cys-64, Cys-67, and Ser-276. Residues 46–265 (WGEGTATFMI…GEVALSMGFK (220 aa)) form the Radical SAM core domain.

It belongs to the radical SAM superfamily. Lipoyl synthase family. Requires [4Fe-4S] cluster as cofactor.

It localises to the cytoplasm. It catalyses the reaction [[Fe-S] cluster scaffold protein carrying a second [4Fe-4S](2+) cluster] + N(6)-octanoyl-L-lysyl-[protein] + 2 oxidized [2Fe-2S]-[ferredoxin] + 2 S-adenosyl-L-methionine + 4 H(+) = [[Fe-S] cluster scaffold protein] + N(6)-[(R)-dihydrolipoyl]-L-lysyl-[protein] + 4 Fe(3+) + 2 hydrogen sulfide + 2 5'-deoxyadenosine + 2 L-methionine + 2 reduced [2Fe-2S]-[ferredoxin]. It participates in protein modification; protein lipoylation via endogenous pathway; protein N(6)-(lipoyl)lysine from octanoyl-[acyl-carrier-protein]: step 2/2. In terms of biological role, catalyzes the radical-mediated insertion of two sulfur atoms into the C-6 and C-8 positions of the octanoyl moiety bound to the lipoyl domains of lipoate-dependent enzymes, thereby converting the octanoylated domains into lipoylated derivatives. The protein is Lipoyl synthase of Pyrobaculum arsenaticum (strain DSM 13514 / JCM 11321 / PZ6).